The chain runs to 288 residues: Protoheme IX farnesyltransferase (288 aa).

Helical transmembrane passes span 8 to 28 (IIKP…FLLA), 35 to 55 (VNLF…ASIF), 75 to 95 (IAIG…LLIL), 105 to 125 (FLTI…YSLL), 130 to 150 (SVYS…IGYC), 161 to 181 (FILL…IGLV), 205 to 225 (INII…FFAG), 230 to 250 (NYLF…IKGF), and 265 to 285 (IFLF…IDYK).

This sequence belongs to the UbiA prenyltransferase family. Protoheme IX farnesyltransferase subfamily.

The protein resides in the cell membrane. It carries out the reaction heme b + (2E,6E)-farnesyl diphosphate + H2O = Fe(II)-heme o + diphosphate. Its pathway is porphyrin-containing compound metabolism; heme O biosynthesis; heme O from protoheme: step 1/1. In terms of biological role, converts heme B (protoheme IX) to heme O by substitution of the vinyl group on carbon 2 of heme B porphyrin ring with a hydroxyethyl farnesyl side group. The protein is Protoheme IX farnesyltransferase of Wigglesworthia glossinidia brevipalpis.